The primary structure comprises 290 residues: Eukaryotic translation initiation factor 3 subunit F-2 (290 aa).

An MPN domain is found at 12–150 (VRLQPLVLFQ…TRLYCGVTMG (139 aa)).

The protein belongs to the eIF-3 subunit F family. In terms of assembly, component of the eukaryotic translation initiation factor 3 (eIF-3) complex. The eIF-3 complex interacts with pix.

The protein localises to the cytoplasm. In terms of biological role, component of the eukaryotic translation initiation factor 3 (eIF-3) complex, which is involved in protein synthesis of a specialized repertoire of mRNAs and, together with other initiation factors, stimulates binding of mRNA and methionyl-tRNAi to the 40S ribosome. The eIF-3 complex specifically targets and initiates translation of a subset of mRNAs involved in cell proliferation. The chain is Eukaryotic translation initiation factor 3 subunit F-2 from Drosophila virilis (Fruit fly).